We begin with the raw amino-acid sequence, 259 residues long: Imidazole glycerol phosphate synthase subunit HisF (259 aa).

Residues Asp-11 and Asp-130 contribute to the active site.

It belongs to the HisA/HisF family. Heterodimer of HisH and HisF.

It is found in the cytoplasm. It catalyses the reaction 5-[(5-phospho-1-deoxy-D-ribulos-1-ylimino)methylamino]-1-(5-phospho-beta-D-ribosyl)imidazole-4-carboxamide + L-glutamine = D-erythro-1-(imidazol-4-yl)glycerol 3-phosphate + 5-amino-1-(5-phospho-beta-D-ribosyl)imidazole-4-carboxamide + L-glutamate + H(+). It participates in amino-acid biosynthesis; L-histidine biosynthesis; L-histidine from 5-phospho-alpha-D-ribose 1-diphosphate: step 5/9. Functionally, IGPS catalyzes the conversion of PRFAR and glutamine to IGP, AICAR and glutamate. The HisF subunit catalyzes the cyclization activity that produces IGP and AICAR from PRFAR using the ammonia provided by the HisH subunit. In Desulforapulum autotrophicum (strain ATCC 43914 / DSM 3382 / VKM B-1955 / HRM2) (Desulfobacterium autotrophicum), this protein is Imidazole glycerol phosphate synthase subunit HisF.